The chain runs to 364 residues: Probable tartrate dehydrogenase/decarboxylase TtuC (364 aa).

Residues aspartate 222, aspartate 246, and aspartate 250 each coordinate Mn(2+).

The protein belongs to the isocitrate and isopropylmalate dehydrogenases family. The cofactor is Mg(2+). It depends on Mn(2+) as a cofactor. Requires K(+) as cofactor.

It localises to the cytoplasm. The enzyme catalyses tartrate + NAD(+) = 2-hydroxy-3-oxosuccinate + NADH + H(+). The catalysed reaction is (2R,3S)-tartrate + NAD(+) = 2-hydroxy-3-oxosuccinate + NADH + H(+). It carries out the reaction (2R,3R)-tartrate + NAD(+) = 2-hydroxy-3-oxosuccinate + NADH + H(+). It catalyses the reaction (2R,3R)-tartrate + H(+) = (R)-glycerate + CO2. The enzyme catalyses (R)-malate + NAD(+) = pyruvate + CO2 + NADH. It functions in the pathway carbohydrate acid metabolism; tartrate degradation; 2-hydroxy-3-oxosuccinate from L-tartrate: step 1/1. The protein operates within carbohydrate acid metabolism; tartrate degradation; 2-hydroxy-3-oxosuccinate from meso-tartrate: step 1/1. It participates in carbohydrate acid metabolism; tartrate degradation; D-glycerate from L-tartrate: step 1/1. Has multiple catalytic activities. Apart from catalyzing the oxidation of (+)-tartrate to oxaloglycolate, also converts meso-tartrate to D-glycerate and catalyzes the oxidative decarboxylation of D-malate to pyruvate. In Agrobacterium vitis (Rhizobium vitis), this protein is Probable tartrate dehydrogenase/decarboxylase TtuC (ttuC).